Here is a 620-residue protein sequence, read N- to C-terminus: PAN2-PAN3 deadenylation complex subunit PAN3 (620 aa).

The segment at 7–36 (SAKGTLCKNILIYGYCKYENKGCAFSHRRN) adopts a C3H1-type zinc-finger fold. Disordered stretches follow at residues 39 to 73 (ANSG…QPST) and 95 to 168 (VFVP…QPGP). Polar residues-rich tracts occupy residues 63 to 73 (NVNTPSFQPST) and 101 to 126 (TPAS…TVSN). A pseudokinase domain region spans residues 226-482 (QSYPGGPEIV…LESYIRKHLA (257 aa)). ATP-binding positions include Arg-274, 323–330 (DYYPNAST), and 380–381 (SK). Residues 483-521 (IRLLDVVDMLEDSNDYLESQLSTELENARLVRLMTKINF) are a coiled coil. The tract at residues 522 to 620 (IVDRPEWDNE…SVFRTITRGK (99 aa)) is knob domain.

Belongs to the protein kinase superfamily. PAN3 family. Homodimer. Forms a heterotrimer with a catalytic subunit PAN2 to form the poly(A)-nuclease (PAN) deadenylation complex. Interacts (via PAM-2 motif) with poly(A)-binding protein PAB1 (via PABC domain), conferring substrate specificity of the enzyme complex.

It localises to the cytoplasm. Functionally, regulatory subunit of the poly(A)-nuclease (PAN) deadenylation complex, one of two cytoplasmic mRNA deadenylases involved in mRNA turnover. PAN specifically shortens poly(A) tails of RNA and the activity is stimulated by poly(A)-binding protein PAB1. PAN deadenylation is followed by rapid degradation of the shortened mRNA tails by the CCR4-NOT complex. Deadenylated mRNAs are then degraded by two alternative mechanisms, namely exosome-mediated 3'-5' exonucleolytic degradation, or deadenylation-dependent mRNA decaping and subsequent 5'-3' exonucleolytic degradation by XRN1. May also be involved in post-transcriptional maturation of mRNA poly(A) tails. PAN3 acts as a positive regulator for PAN activity, recruiting the catalytic subunit PAN2 to mRNA via its interaction with RNA and with PAB1. This is PAN2-PAN3 deadenylation complex subunit PAN3 from Meyerozyma guilliermondii (strain ATCC 6260 / CBS 566 / DSM 6381 / JCM 1539 / NBRC 10279 / NRRL Y-324) (Yeast).